Consider the following 294-residue polypeptide: tRNA dimethylallyltransferase (294 aa).

7–14 is a binding site for ATP; the sequence is GPTGSGKS. Residue 9–14 participates in substrate binding; it reads TGSGKS.

Belongs to the IPP transferase family. Monomer. Mg(2+) is required as a cofactor.

The catalysed reaction is adenosine(37) in tRNA + dimethylallyl diphosphate = N(6)-dimethylallyladenosine(37) in tRNA + diphosphate. Functionally, catalyzes the transfer of a dimethylallyl group onto the adenine at position 37 in tRNAs that read codons beginning with uridine, leading to the formation of N6-(dimethylallyl)adenosine (i(6)A). The chain is tRNA dimethylallyltransferase from Akkermansia muciniphila (strain ATCC BAA-835 / DSM 22959 / JCM 33894 / BCRC 81048 / CCUG 64013 / CIP 107961 / Muc).